The following is a 626-amino-acid chain: (+)-3-carene synthase 2, chloroplastic (626 aa).

The transit peptide at 1–45 (MSLISAVPLASSCVSKSLISSVREHTALRRAIATLQMSRRGKSVA) directs the protein to the chloroplast. Asp377, Asp381, and Asp529 together coordinate Mg(2+). Positions 377–381 (DDMYD) match the DDXXD motif motif.

The protein belongs to the terpene synthase family. Tpsd subfamily. Mg(2+) is required as a cofactor. Mn(2+) serves as cofactor.

It is found in the plastid. It localises to the chloroplast. It carries out the reaction (2E)-geranyl diphosphate = (+)-car-3-ene + diphosphate. The protein operates within terpene metabolism; oleoresin biosynthesis. It functions in the pathway secondary metabolite biosynthesis; terpenoid biosynthesis. In terms of biological role, monoterpene synthase (TPS) involved in the biosynthesis of monoterpene natural products included in conifer oleoresin secretions and volatile emissions; these compounds contribute to biotic and abiotic stress defense against herbivores and pathogens. Catalyzes the conversion of (2E)-geranyl diphosphate (GPP) to (+)-3-carene. This chain is (+)-3-carene synthase 2, chloroplastic, found in Pinus banksiana (Jack pine).